The sequence spans 404 residues: UPF0261 protein CTC_01794 (404 aa).

Belongs to the UPF0261 family.

This Clostridium tetani (strain Massachusetts / E88) protein is UPF0261 protein CTC_01794.